An 809-amino-acid polypeptide reads, in one-letter code: LPS-assembly protein LptD (809 aa).

A signal peptide spans 1–22 (MRRALRLLPLPLSIAICLPAMA).

It belongs to the LptD family. Component of the lipopolysaccharide transport and assembly complex. Interacts with LptE and LptA.

It is found in the cell outer membrane. Together with LptE, is involved in the assembly of lipopolysaccharide (LPS) at the surface of the outer membrane. The sequence is that of LPS-assembly protein LptD from Xanthomonas campestris pv. campestris (strain 8004).